We begin with the raw amino-acid sequence, 65 residues long: Hainantoxin-X.2 (65 aa).

A signal peptide spans 1-20 (MNVKILVLVAVLCLVVSTHA). A propeptide spanning residues 21-37 (ERHSKTDMEDSPMIQER) is cleaved from the precursor. 3 disulfides stabilise this stretch: C39/C56, C46/C59, and C55/C64.

This sequence belongs to the neurotoxin 36 family. 02 subfamily. Expressed by the venom gland.

The protein localises to the secreted. Functionally, reversibly blocks N-type calcium channels (Cav2.2/CACNA1B) in rat dorsal root ganglion cells. Elicits no toxic symptoms in either vertebrates or invertebrates during a period of 48 hours post-injection, when it was assayed in vivo by direct injection into mice and cockroaches. This Cyriopagopus hainanus (Chinese bird spider) protein is Hainantoxin-X.2.